An 865-amino-acid chain; its full sequence is Bifunctional uridylyltransferase/uridylyl-removing enzyme (865 aa).

Residues 1 to 318 (MPHVDLNPLK…FPRPDSDARL (318 aa)) form a uridylyltransferase region. Residues 319 to 675 (IDDDFRNLRE…VRPTEHGEGL (357 aa)) form a uridylyl-removing region. An HD domain is found at 437–559 (VDQHTLAVVR…VGDERRLAAL (123 aa)). 2 ACT domains span residues 676 to 762 (QVMV…RLPH) and 789 to 865 (RLSV…QQAA). The tract at residues 747–767 (DPHAARHAHAPRRLPHSHARR) is disordered. Residues 751 to 767 (ARHAHAPRRLPHSHARR) show a composition bias toward basic residues.

The protein belongs to the GlnD family. It depends on Mg(2+) as a cofactor.

It catalyses the reaction [protein-PII]-L-tyrosine + UTP = [protein-PII]-uridylyl-L-tyrosine + diphosphate. The enzyme catalyses [protein-PII]-uridylyl-L-tyrosine + H2O = [protein-PII]-L-tyrosine + UMP + H(+). Its activity is regulated as follows. Uridylyltransferase (UTase) activity is inhibited by glutamine, while glutamine activates uridylyl-removing (UR) activity. Functionally, modifies, by uridylylation and deuridylylation, the PII regulatory proteins (GlnB and homologs), in response to the nitrogen status of the cell that GlnD senses through the glutamine level. Under low glutamine levels, catalyzes the conversion of the PII proteins and UTP to PII-UMP and PPi, while under higher glutamine levels, GlnD hydrolyzes PII-UMP to PII and UMP (deuridylylation). Thus, controls uridylylation state and activity of the PII proteins, and plays an important role in the regulation of nitrogen assimilation and metabolism. In Bordetella parapertussis (strain 12822 / ATCC BAA-587 / NCTC 13253), this protein is Bifunctional uridylyltransferase/uridylyl-removing enzyme.